The following is a 691-amino-acid chain: Elongation factor G (691 aa).

Residues 8–283 (KKVRNIGIAA…AVVAYLPAPD (276 aa)) form the tr-type G domain. Residues 17 to 24 (AHIDAGKT), 81 to 85 (DTPGH), and 135 to 138 (NKMD) each bind GTP.

It belongs to the TRAFAC class translation factor GTPase superfamily. Classic translation factor GTPase family. EF-G/EF-2 subfamily.

It is found in the cytoplasm. Functionally, catalyzes the GTP-dependent ribosomal translocation step during translation elongation. During this step, the ribosome changes from the pre-translocational (PRE) to the post-translocational (POST) state as the newly formed A-site-bound peptidyl-tRNA and P-site-bound deacylated tRNA move to the P and E sites, respectively. Catalyzes the coordinated movement of the two tRNA molecules, the mRNA and conformational changes in the ribosome. The polypeptide is Elongation factor G (Campylobacter jejuni subsp. jejuni serotype O:6 (strain 81116 / NCTC 11828)).